The chain runs to 147 residues: uncharacterized protein (147 aa).

Residues 50 to 138 form the ABM domain; sequence IVVAGNIKVK…LLAKPAEIKI (89 aa).

This sequence belongs to the LsrG family.

This is an uncharacterized protein from Synechocystis sp. (strain ATCC 27184 / PCC 6803 / Kazusa).